Reading from the N-terminus, the 401-residue chain is MYNVKKDFPIFKNQGDPYVYLDSAATTHKPQCVIDSIVDYYSSSYATVNRALYTASHDITFAHWQVRSKVGSWIGAQYDQEIIFTRGTTSSLNLLAIAANDSWLAGGTVVISEAEHHANLVSWELACQRSGATIKKVRVDDEGMVDCSHLEQLLKQGVQLVSLAHVSNVSGAVLPLPEIAHLVHRYEALFAVDGAQGVGKGPLNLSEWGVDFYAFSGHKLYAPTGIGVLYGKKELLESLPPVEGGGDMVIVYDFEELSYQEPPLRFEAGTPHIAGVLGLGAAIDYLQALPFSITDRLTELTHFLYEQLLTVPGIQIIGPKQGAARGSLCSISIPGVQASDLGFLLDGRGISVRSGHQCSQPAMVRWDLGHVLRASLGIYNEQQDILLFVEALKDILRAYRS.

Position 219 is an N6-(pyridoxal phosphate)lysine (Lys219). Residue Cys358 is the Cysteine persulfide intermediate of the active site.

The protein belongs to the class-V pyridoxal-phosphate-dependent aminotransferase family. Csd subfamily. Pyridoxal 5'-phosphate serves as cofactor.

It carries out the reaction (sulfur carrier)-H + L-cysteine = (sulfur carrier)-SH + L-alanine. Its function is as follows. Catalyzes the removal of elemental sulfur and selenium atoms from L-cysteine, L-cystine, L-selenocysteine, and L-selenocystine to produce L-alanine. The protein is Probable cysteine desulfurase (csd) of Chlamydia trachomatis serovar D (strain ATCC VR-885 / DSM 19411 / UW-3/Cx).